The sequence spans 330 residues: Protein RfbI (330 aa).

Residues 3-89 (HIIKIFPSNI…ELNAHFFPEL (87 aa)) form the 2Fe-2S ferredoxin-type domain. Cys37, Cys42, and Cys45 together coordinate [2Fe-2S] cluster. Residues 94–192 (KKIVPCKVNS…EGPCGTFFIR (99 aa)) enclose the FAD-binding FR-type domain.

The cofactor is [2Fe-2S] cluster.

It functions in the pathway bacterial outer membrane biogenesis; LPS O-antigen biosynthesis. The protein is Protein RfbI (rfbI) of Salmonella typhimurium (strain LT2 / SGSC1412 / ATCC 700720).